A 37-amino-acid polypeptide reads, in one-letter code: Large ribosomal subunit protein bL36c (37 aa).

The protein belongs to the bacterial ribosomal protein bL36 family.

The protein localises to the plastid. Its subcellular location is the chloroplast. In Anthoceros angustus (Hornwort), this protein is Large ribosomal subunit protein bL36c (rpl36).